Consider the following 399-residue polypeptide: Glycosyltransferase BC10 (399 aa).

Over 1–17 (MKPPRRWMYGRGGGKGK) the chain is Cytoplasmic. A helical; Signal-anchor for type II membrane protein membrane pass occupies residues 18-38 (PAGLLLLGVFLCLSVVLLLLL). Residues 39–399 (HGSSPSLEGE…LIAANGASTM (361 aa)) lie on the Lumenal side of the membrane. N-linked (GlcNAc...) asparagine glycans are attached at residues Asn-142 and Asn-188.

This sequence belongs to the glycosyltransferase 14 family. Expressed in roots, culms, leaves and panicles. Expressed in vascular bundles of leaf sheaths and stems where sclerenchyma cells are developing. Expressed in mechanical tissues of young organs, such as young leaf sheaths, stems and tiller buds.

The protein resides in the membrane. In terms of biological role, glycosyltransferase required for the regulation of cellulose biosynthesis in the cell wall. Required for the biosynthesis of hexoses (glucose, mannose and galactose) in both cellulosic and non-cellulosic (pectins and hemicelluloses) components of cell walls. Required for the formation of arabinogalactan proteins which contribute to the strengthening of cell walls. Possesses low glycosyltransferase activity. The polypeptide is Glycosyltransferase BC10 (Oryza sativa subsp. japonica (Rice)).